We begin with the raw amino-acid sequence, 154 residues long: Large ribosomal subunit protein uL13 (154 aa).

It belongs to the universal ribosomal protein uL13 family. Part of the 50S ribosomal subunit.

Its function is as follows. This protein is one of the early assembly proteins of the 50S ribosomal subunit, although it is not seen to bind rRNA by itself. It is important during the early stages of 50S assembly. The sequence is that of Large ribosomal subunit protein uL13 from Bartonella tribocorum (strain CIP 105476 / IBS 506).